The following is a 446-amino-acid chain: Eukaryotic translation initiation factor 3 subunit E (446 aa).

One can recognise a PCI domain in the interval 256 to 425 (TDLFFSPAYI…GTVIMNHPPQ (170 aa)).

This sequence belongs to the eIF-3 subunit E family. As to quaternary structure, component of the eukaryotic translation initiation factor 3 (eIF-3) complex.

The protein localises to the cytoplasm. In terms of biological role, component of the eukaryotic translation initiation factor 3 (eIF-3) complex, which is involved in protein synthesis of a specialized repertoire of mRNAs and, together with other initiation factors, stimulates binding of mRNA and methionyl-tRNAi to the 40S ribosome. The eIF-3 complex specifically targets and initiates translation of a subset of mRNAs involved in cell proliferation. This is Eukaryotic translation initiation factor 3 subunit E (int6) from Aspergillus terreus (strain NIH 2624 / FGSC A1156).